Reading from the N-terminus, the 833-residue chain is Urease (833 aa).

The Urease domain maps to 395–833 (GALDVHVHYI…LPLTRRYFVY (439 aa)). Residues histidine 400 and histidine 402 each coordinate Ni(2+). 2 residues coordinate urea: histidine 402 and alanine 433. Position 483 (lysine 483) interacts with Ni(2+). At lysine 483 the chain carries N6-carboxylysine. Urea-binding residues include histidine 485 and histidine 512. Ni(2+) is bound by residues histidine 512 and histidine 538. Histidine 586 functions as the Proton donor in the catalytic mechanism. Aspartate 626 lines the Ni(2+) pocket. Residue alanine 629 participates in urea binding.

It in the C-terminal section; belongs to the metallo-dependent hydrolases superfamily. Urease alpha subunit family. Homohexamer. It depends on Ni(2+) as a cofactor. Post-translationally, carboxylation allows a single lysine to coordinate two nickel ions.

It catalyses the reaction urea + 2 H2O + H(+) = hydrogencarbonate + 2 NH4(+). It functions in the pathway nitrogen metabolism; urea degradation; CO(2) and NH(3) from urea (urease route): step 1/1. The urease accessory proteins URE4, URE6 and URE7 are required for urease activity, URE7 supplying nickel for the functional urease. Plays a nutritional role via nitrogen acquisition in the environment. Contributes to the central nervous system invasion by enhancing yeast sequestration within microcapillary beds (such as within the brain) during hematogenous spread, thereby facilitating blood-to-brain invasion by C.neoformans. Affects fitness within the mammalian phagosome, promoting non-lytic exocytosis while delaying intracellular replication and thus reducing phagolysosomal membrane damage, events that could facilitate cryptococcal dissemination when transported inside macrophages. Urease activity is also associated with the regulation of key intracellular metabolic pathways, including melanin biosynthesis, polyamine biosynthesis, as well as intracellular levels of proline and reactive oxygen species. This Cryptococcus neoformans var. grubii serotype A (strain H99 / ATCC 208821 / CBS 10515 / FGSC 9487) (Filobasidiella neoformans var. grubii) protein is Urease.